We begin with the raw amino-acid sequence, 1002 residues long: UPF0182 protein alr1037 (1002 aa).

The next 9 membrane-spanning stretches (helical) occupy residues 7 to 29 (FRLS…LGAE), 49 to 71 (RGVL…LALA), 123 to 145 (LRWL…VHYG), 178 to 200 (QVFS…LIYS), 202 to 224 (FFLR…YNWA), 258 to 280 (LLEL…TYLL), 300 to 319 (HLYG…YWLS), 339 to 361 (VVVQ…FYLL), and 382 to 404 (GAYL…YLIV).

The protein belongs to the UPF0182 family.

The protein resides in the cell membrane. The chain is UPF0182 protein alr1037 from Nostoc sp. (strain PCC 7120 / SAG 25.82 / UTEX 2576).